We begin with the raw amino-acid sequence, 317 residues long: Methionyl-tRNA formyltransferase (317 aa).

Residue 117–120 coordinates (6S)-5,6,7,8-tetrahydrofolate; that stretch reads SLLP.

It belongs to the Fmt family.

The catalysed reaction is L-methionyl-tRNA(fMet) + (6R)-10-formyltetrahydrofolate = N-formyl-L-methionyl-tRNA(fMet) + (6S)-5,6,7,8-tetrahydrofolate + H(+). Attaches a formyl group to the free amino group of methionyl-tRNA(fMet). The formyl group appears to play a dual role in the initiator identity of N-formylmethionyl-tRNA by promoting its recognition by IF2 and preventing the misappropriation of this tRNA by the elongation apparatus. This is Methionyl-tRNA formyltransferase from Herminiimonas arsenicoxydans.